The following is a 200-amino-acid chain: NADH-quinone oxidoreductase subunit C (200 aa).

The protein belongs to the complex I 30 kDa subunit family. NDH-1 is composed of 14 different subunits. Subunits NuoB, C, D, E, F, and G constitute the peripheral sector of the complex.

It is found in the cell inner membrane. It catalyses the reaction a quinone + NADH + 5 H(+)(in) = a quinol + NAD(+) + 4 H(+)(out). Functionally, NDH-1 shuttles electrons from NADH, via FMN and iron-sulfur (Fe-S) centers, to quinones in the respiratory chain. The immediate electron acceptor for the enzyme in this species is believed to be ubiquinone. Couples the redox reaction to proton translocation (for every two electrons transferred, four hydrogen ions are translocated across the cytoplasmic membrane), and thus conserves the redox energy in a proton gradient. This Burkholderia ambifaria (strain MC40-6) protein is NADH-quinone oxidoreductase subunit C.